Here is a 295-residue protein sequence, read N- to C-terminus: UDP-N-acetylenolpyruvoylglucosamine reductase (295 aa).

The region spanning 23-188 is the FAD-binding PCMH-type domain; sequence KVGGPADFLA…ISAKFALKPG (166 aa). Arg-167 is an active-site residue. Ser-217 acts as the Proton donor in catalysis. Glu-287 is a catalytic residue.

This sequence belongs to the MurB family. It depends on FAD as a cofactor.

Its subcellular location is the cytoplasm. The catalysed reaction is UDP-N-acetyl-alpha-D-muramate + NADP(+) = UDP-N-acetyl-3-O-(1-carboxyvinyl)-alpha-D-glucosamine + NADPH + H(+). It participates in cell wall biogenesis; peptidoglycan biosynthesis. Cell wall formation. The chain is UDP-N-acetylenolpyruvoylglucosamine reductase from Streptococcus pyogenes serotype M28 (strain MGAS6180).